Here is a 339-residue protein sequence, read N- to C-terminus: Deubiquitinase and deneddylase Dub2 (339 aa).

A helical membrane pass occupies residues 36-56 (IIIALFLIVISCGLILCAYTF). Active-site residues include His203, Asp220, and Cys282.

This sequence belongs to the peptidase C48 family.

The protein resides in the secreted. The protein localises to the host cell. It is found in the membrane. In terms of biological role, effector proteins function to alter host cell physiology and promote bacterial survival in host tissues. This protease possesses deubiquitinating and deneddylating activities. This Chlamydia trachomatis serovar D (strain ATCC VR-885 / DSM 19411 / UW-3/Cx) protein is Deubiquitinase and deneddylase Dub2 (cdu2).